Here is a 209-residue protein sequence, read N- to C-terminus: Uracil phosphoribosyltransferase (209 aa).

Residues R79, R104, and 131-139 each bind 5-phospho-alpha-D-ribose 1-diphosphate; that span reads DPMLATGGS. Residues V194 and 199–201 contribute to the uracil site; that span reads GDA. D200 provides a ligand contact to 5-phospho-alpha-D-ribose 1-diphosphate.

This sequence belongs to the UPRTase family. Mg(2+) is required as a cofactor.

It catalyses the reaction UMP + diphosphate = 5-phospho-alpha-D-ribose 1-diphosphate + uracil. It functions in the pathway pyrimidine metabolism; UMP biosynthesis via salvage pathway; UMP from uracil: step 1/1. Allosterically activated by GTP. Functionally, catalyzes the conversion of uracil and 5-phospho-alpha-D-ribose 1-diphosphate (PRPP) to UMP and diphosphate. The chain is Uracil phosphoribosyltransferase from Bacillus mycoides (strain KBAB4) (Bacillus weihenstephanensis).